Reading from the N-terminus, the 295-residue chain is Urease accessory protein UreD (295 aa).

It belongs to the UreD family. In terms of assembly, ureD, UreF and UreG form a complex that acts as a GTP-hydrolysis-dependent molecular chaperone, activating the urease apoprotein by helping to assemble the nickel containing metallocenter of UreC. The UreE protein probably delivers the nickel.

Its subcellular location is the cytoplasm. Functionally, required for maturation of urease via the functional incorporation of the urease nickel metallocenter. The polypeptide is Urease accessory protein UreD (Saccharophagus degradans (strain 2-40 / ATCC 43961 / DSM 17024)).